The following is a 442-amino-acid chain: Amino-acid acetyltransferase (442 aa).

The N-acetyltransferase domain occupies Glu295–Ser442.

This sequence belongs to the acetyltransferase family. ArgA subfamily.

It is found in the cytoplasm. It carries out the reaction L-glutamate + acetyl-CoA = N-acetyl-L-glutamate + CoA + H(+). It functions in the pathway amino-acid biosynthesis; L-arginine biosynthesis; N(2)-acetyl-L-ornithine from L-glutamate: step 1/4. In Aeromonas salmonicida (strain A449), this protein is Amino-acid acetyltransferase.